The sequence spans 338 residues: Methionine import ATP-binding protein MetN (338 aa).

One can recognise an ABC transporter domain in the interval isoleucine 2–valine 241. Position 38 to 45 (glycine 38 to serine 45) interacts with ATP.

Belongs to the ABC transporter superfamily. Methionine importer (TC 3.A.1.24) family. In terms of assembly, the complex is composed of two ATP-binding proteins (MetN), two transmembrane proteins (MetI) and a solute-binding protein (MetQ).

The protein localises to the cell membrane. It carries out the reaction L-methionine(out) + ATP + H2O = L-methionine(in) + ADP + phosphate + H(+). The enzyme catalyses D-methionine(out) + ATP + H2O = D-methionine(in) + ADP + phosphate + H(+). Its function is as follows. Part of the ABC transporter complex MetNIQ involved in methionine import. Responsible for energy coupling to the transport system. The protein is Methionine import ATP-binding protein MetN of Halalkalibacterium halodurans (strain ATCC BAA-125 / DSM 18197 / FERM 7344 / JCM 9153 / C-125) (Bacillus halodurans).